Consider the following 104-residue polypeptide: Pterin-4-alpha-carbinolamine dehydratase (104 aa).

An N-acetylalanine modification is found at Ala-2. Substrate-binding positions include 61 to 63 (DHH) and 78 to 81 (STHE).

This sequence belongs to the pterin-4-alpha-carbinolamine dehydratase family. As to quaternary structure, homotetramer and homodimer. Heterotetramer with HNF1A; formed by a dimer of dimers. Interacts with HNF1B (via HNF-p1 domain); the interaction increases HNF1B transactivation activity.

It localises to the cytoplasm. It is found in the nucleus. The enzyme catalyses (4aS,6R)-4a-hydroxy-L-erythro-5,6,7,8-tetrahydrobiopterin = (6R)-L-erythro-6,7-dihydrobiopterin + H2O. Functionally, involved in tetrahydrobiopterin biosynthesis. Seems to both prevent the formation of 7-pterins and accelerate the formation of quinonoid-BH2. Coactivator for HNF1A-dependent transcription. Regulates the dimerization of homeodomain protein HNF1A and enhances its transcriptional activity. Also acts as a coactivator for HNF1B-dependent transcription. The chain is Pterin-4-alpha-carbinolamine dehydratase (Pcbd1) from Rattus norvegicus (Rat).